The primary structure comprises 82 residues: MTRGNQRDLAREKNQKKLADQKKRQGASGQDGNAGLSMDARMNRDADVMRIKQEKAAAKKEAEAAAAAANAKKVAKVDPLKM.

Over residues 1 to 23 (MTRGNQRDLAREKNQKKLADQKK) the composition is skewed to basic and acidic residues. Disordered stretches follow at residues 1–41 (MTRG…MDAR) and 63–82 (EAAA…PLKM).

The protein belongs to the SERF family.

The protein resides in the cytoplasm. It is found in the cytosol. Its subcellular location is the nucleus. In terms of biological role, positive regulator of protein aggregation and age-related proteotoxicity. Induces conformational changes in aggregation-prone proteins, driving them into compact formations preceding the formation of aggregates. The sequence is that of Modifier of protein aggregation 4 from Caenorhabditis elegans.